The sequence spans 377 residues: uncharacterized protein (377 aa).

The next 4 membrane-spanning stretches (helical) occupy residues 26-46, 67-87, 108-128, and 135-155; these read TFQN…VVAI, TVGS…WVII, FLTF…ISLT, and IDYG…ALYI.

The protein resides in the cell membrane. This is an uncharacterized protein from Methanocaldococcus jannaschii (strain ATCC 43067 / DSM 2661 / JAL-1 / JCM 10045 / NBRC 100440) (Methanococcus jannaschii).